The sequence spans 86 residues: Toxin Tpa6 (86 aa).

Residues 1–20 (MSIFPIALALLLIGLEEGEA) form the signal peptide. Residues 22–85 (RDGYPLSKNN…WGDPGTKPCM (64 aa)) enclose the LCN-type CS-alpha/beta domain. 4 disulfide bridges follow: Cys-33–Cys-84, Cys-37–Cys-58, Cys-43–Cys-64, and Cys-47–Cys-66.

It belongs to the long (4 C-C) scorpion toxin superfamily. Sodium channel inhibitor family. Beta subfamily. As to expression, expressed by the venom gland.

Its subcellular location is the secreted. Functionally, beta toxins bind voltage-independently at site-4 of sodium channels (Nav) and shift the voltage of activation toward more negative potentials thereby affecting sodium channel activation and promoting spontaneous and repetitive firing. The protein is Toxin Tpa6 of Tityus pachyurus (Colombian scorpion).